Here is a 239-residue protein sequence, read N- to C-terminus: Probable transcriptional regulatory protein ACL_0044 (239 aa).

Belongs to the TACO1 family.

It is found in the cytoplasm. The polypeptide is Probable transcriptional regulatory protein ACL_0044 (Acholeplasma laidlawii (strain PG-8A)).